The sequence spans 876 residues: MAAPALSGDQIRETFLKFFEGKGHRRLPSASLIPEDPTVLLTIAGMLPFKPIFLGQQVAEVPRATTSQKCIRTNDIENVGRTARHHTFFEMLGNFSFGDYFKKEAIAFAWELVTEVFQVPAERLAVSVFEEDDEAFAIWRDQIGVPEARIQRLGAKDNFWASGPTGPCGPCSEIYYDFHPELGNDGLDLEDDSRFIEVYNLVFMQYNRDAAGNLTALEKQNIDTGMGLERMAQVLQGVPNNYETDLIFPIIQAVAAIAQRDYASESESVKVSLKVIGDHLRAVTHLIADGVTASNLGRGYVLRRLIRRVVRHGRLIGIDRPFTAEIAETAIALMAAQYPNLREREAAIKAELTREEQRFLETLERGEKLLAELLAAATDQIRGEDAFVLYDTYGFPLELTQEIAEEKGLTVDLAGFEAAMAAQRQRSQAAHETIDLTVQGSLDRLAEQIHPSEFVGYGDAVATAKVTALLREGQSVEAAEAGDRVQIVLDHTPFYAESGGQVGDRGVLTGESLIVRIEDVQKESGFFVHYGQIERGLLQVGDSVTAQIDRACRRRAQANHTATHLLQAALKLIVDEGISQAGSLVAFDRLRFDFNCPRAVTPEELRQIEDQINQWIAEAHGTVVEVMPIATAKAKGAVAMFGEKYGAEVRVIDVPGVSMELCGGTHVANTAEIGLFKIISEAGVASGVRRIEAVAGPAVLEYLNVRDAVVRDLSDRFKAKPEELSDRVTALQEELKANQKQLTALKAELAIAKSDALVSQAIPVGDAQVLVETLTGVDAAALQTAAERLQQKLGDAGAVVLGSSPEEGKVTLVAAFGPAIIAKGLKAGQFIGGIAKICGGGGGGRPNLAQAGGRDASKLPEAIAAALDQLKTAIAS.

4 residues coordinate Zn(2+): histidine 560, histidine 564, cysteine 662, and histidine 666.

Belongs to the class-II aminoacyl-tRNA synthetase family. It depends on Zn(2+) as a cofactor.

It is found in the cytoplasm. The catalysed reaction is tRNA(Ala) + L-alanine + ATP = L-alanyl-tRNA(Ala) + AMP + diphosphate. Functionally, catalyzes the attachment of alanine to tRNA(Ala) in a two-step reaction: alanine is first activated by ATP to form Ala-AMP and then transferred to the acceptor end of tRNA(Ala). Also edits incorrectly charged Ser-tRNA(Ala) and Gly-tRNA(Ala) via its editing domain. The protein is Alanine--tRNA ligase of Synechococcus sp. (strain ATCC 27144 / PCC 6301 / SAUG 1402/1) (Anacystis nidulans).